The following is a 783-amino-acid chain: Putative ATP-dependent DNA helicase fml2 (783 aa).

One can recognise a Helicase ATP-binding domain in the interval 118-286 (FCEQALFHNL…KVVDCLHISK (169 aa)). 131-138 (LPTGLGKT) is an ATP binding site. The DEAH box motif lies at 234–237 (DEAH). The region spanning 450-619 (KMNHLLELLK…GKKIALKKDV (170 aa)) is the Helicase C-terminal domain.

It belongs to the DEAD box helicase family. DEAH subfamily. FANCM sub-subfamily.

It localises to the nucleus. Its subcellular location is the nucleolus. It carries out the reaction ATP + H2O = ADP + phosphate + H(+). The sequence is that of Putative ATP-dependent DNA helicase fml2 from Schizosaccharomyces pombe (strain 972 / ATCC 24843) (Fission yeast).